A 324-amino-acid chain; its full sequence is MGRTSKDKRDVYYRLAKENGWRARSAFKLLQLDEEFQLFKGVKRAVDLCAAPGSWSQVLSQKVGGQGSGQVVAVDLQAMAPLPGVIQIQGDITQLSTAKEIIQHFEGCPADLVVCDGAPDVTGLHDVDEYMQAQLLLAALNIATHVLKLGGCFVAKIFRGRDVTLLYSQLRIFFSSVLCAKPKSSRNSSIEAFAVCQGYDPPEGFIPDLTRPLLNHSYDTDFNQLDGPTRVIVPFVACGDLSAYDSDRTYSLDLDGGSEYKYTPPTQPPIAPPYQEACRLKKNGQLAKELLPQECSINSVDKLPQPLAIHTLLDPKVEDNEIHC.

Positions 53, 55, 75, 91, and 116 each coordinate S-adenosyl-L-methionine. Lys156 functions as the Proton acceptor in the catalytic mechanism. Positions 221 to 240 are required for binding to WDR6; sequence DFNQLDGPTRVIVPFVACGD.

The protein belongs to the class I-like SAM-binding methyltransferase superfamily. RNA methyltransferase RlmE family. TRM7 subfamily. In terms of assembly, interacts with WDR6; the interaction is direct, and required for 2'-O-methylation of position 34 in substrate tRNAs.

It localises to the cytoplasm. It is found in the nucleus. It carries out the reaction cytidine(32)/guanosine(34) in tRNA + 2 S-adenosyl-L-methionine = 2'-O-methylcytidine(32)/2'-O-methylguanosine(34) in tRNA + 2 S-adenosyl-L-homocysteine + 2 H(+). Its function is as follows. Methylates the 2'-O-ribose of nucleotides at positions 32 and 34 of the tRNA anticodon loop of substrate tRNAs. Requisite for faithful cytoplasmic translation. Requires THADA for methylation of the cytidine at position 32 of the anticodon loop of substrate tRNAs. Requires WDR6 for methylation of the nucleotide at position 34 of the anticodon loop of substrate tRNAs. Promotes translation efficiency of the UUU codon. Plays a role in neurogenesis. Required for expression of genes involved in neurogenesis and mitochondrial translation and energy generation. Requisite for RNA-mediated gene silencing. May modify position 32 in tRNA(Arg(ACG)), tRNA(Gln(CUG)), tRNA(Leu(UAA)), tRNA(Leu(UAG)), tRNA(Leu(AAG)), tRNA(Leu(CAG)), tRNA(Phe(GAA)), tRNA(Trp(CCA)) and tRNA(Val(AAC)), and position 34 in tRNA(Phe(GAA)), tRNA(Leu(CAA)), tRNA(Leu(UAA)), tRNA(Sec(UCA)), and tRNA(Trp(CCA)). The chain is tRNA (cytidine(32)/guanosine(34)-2'-O)-methyltransferase from Mus musculus (Mouse).